The following is a 196-amino-acid chain: ECF RNA polymerase sigma factor SigM (196 aa).

Positions 39 to 105 (LFRRHHRQLH…ACLDRLRRAK (67 aa)) are sigma-70 factor domain-2. The short motif at 63–66 (DALQ) is the Interaction with polymerase core subunit RpoC element. Residues 130–181 (AVQRALMRLPVEQRAAVVAVDMQGYSIADTARMLGVAEGTVKSRCARARARL) are sigma-70 factor domain-4. The segment at residues 156 to 175 (IADTARMLGVAEGTVKSRCA) is a DNA-binding region (H-T-H motif).

This sequence belongs to the sigma-70 factor family. ECF subfamily. In terms of assembly, interacts transiently with the RNA polymerase catalytic core formed by RpoA, RpoB, RpoC and RpoZ (2 alpha, 1 beta, 1 beta' and 1 omega subunit) to form the RNA polymerase holoenzyme that can initiate transcription. Interacts (via sigma-70 factor domain 4) with anti-sigma-M factor RsmA.

In terms of biological role, sigma factors are initiation factors that promote the attachment of RNA polymerase to specific initiation sites and are then released. Extracytoplasmic function (ECF) sigma factors are held in an inactive form by an anti-sigma factor until released by regulated intramembrane proteolysis. The sequence is that of ECF RNA polymerase sigma factor SigM (sigM) from Mycobacterium tuberculosis (strain ATCC 35801 / TMC 107 / Erdman).